The chain runs to 666 residues: Long chain acyl-CoA synthetase 5 (666 aa).

228-239 contributes to the ATP binding site; it reads IMYTSGTTGDPK. The segment at 495 to 519 is fatty acid-binding; that stretch reads DGWLHTGDVGEWQPNGSMKIIDRKK.

This sequence belongs to the ATP-dependent AMP-binding enzyme family. The cofactor is Mg(2+).

The enzyme catalyses a long-chain fatty acid + ATP + CoA = a long-chain fatty acyl-CoA + AMP + diphosphate. It participates in lipid metabolism; fatty acid metabolism. Activation of long-chain fatty acids for both synthesis of cellular lipids, and degradation via beta-oxidation. Preferentially uses palmitate, palmitoleate, oleate and linoleate. The sequence is that of Long chain acyl-CoA synthetase 5 (LACS5) from Arabidopsis thaliana (Mouse-ear cress).